We begin with the raw amino-acid sequence, 432 residues long: Glutamate-1-semialdehyde 2,1-aminomutase 1 (432 aa).

Residue lysine 268 is modified to N6-(pyridoxal phosphate)lysine.

Belongs to the class-III pyridoxal-phosphate-dependent aminotransferase family. HemL subfamily. Homodimer. Pyridoxal 5'-phosphate is required as a cofactor.

Its subcellular location is the cytoplasm. It catalyses the reaction (S)-4-amino-5-oxopentanoate = 5-aminolevulinate. Its pathway is porphyrin-containing compound metabolism; protoporphyrin-IX biosynthesis; 5-aminolevulinate from L-glutamyl-tRNA(Glu): step 2/2. This Bacillus mycoides (strain KBAB4) (Bacillus weihenstephanensis) protein is Glutamate-1-semialdehyde 2,1-aminomutase 1.